We begin with the raw amino-acid sequence, 294 residues long: Zinc finger protein 346 (294 aa).

At Met-1 the chain carries N-acetylmethionine. Low complexity predominate over residues 1-19 (MECPAPDATDAADPGEAGP). The segment at 1–35 (MECPAPDATDAADPGEAGPYKGSEEPEGREPDGVR) is disordered. Residues 22-35 (GSEEPEGREPDGVR) show a composition bias toward basic and acidic residues. The segment at 70 to 104 (FTSTQCKVCCAMLISESQKLAHYQSKKHANKVKRY) adopts a Matrin-type 1 zinc-finger fold. Zn(2+) contacts are provided by Cys-75, Cys-78, His-91, and His-97. Residue Lys-114 forms a Glycyl lysine isopeptide (Lys-Gly) (interchain with G-Cter in SUMO2) linkage. The Matrin-type 2 zinc-finger motif lies at 131-165 (DKNHCCPICNMTFSSPAVAQSHYLGKTHAKSLKLK). The Zn(2+) site is built by Cys-136, Cys-139, His-152, and His-158. Lys-170 is covalently cross-linked (Glycyl lysine isopeptide (Lys-Gly) (interchain with G-Cter in SUMO2)). 2 consecutive Matrin-type zinc fingers follow at residues 182 to 216 (DPDK…ETKL) and 236 to 270 (GKGY…SPKT). Positions 269–294 (KTLVTLGSQTPVQTQPTPKDSSTVQD) are disordered.

As to quaternary structure, forms a heteromeric complex with XPO5 and ILF3. Found in a nuclear export complex with XPO5, RAN, ILF3, ZNF346 and double-stranded RNA. Interacts with XPO5. Interacts with ILF3 in an RNA-independent manner. As to expression, expressed in all tissues tested, including heart, brain, spleen, lung, liver, muscle, kidney and testis. Exogenous expression induced apoptosis.

It is found in the nucleus. The protein resides in the nucleolus. Its subcellular location is the cytoplasm. In terms of biological role, binds with low affinity to dsDNA and ssRNA, and with high affinity to dsRNA, with no detectable sequence specificity. May bind to specific miRNA hairpins. This is Zinc finger protein 346 (Znf346) from Mus musculus (Mouse).